The chain runs to 222 residues: Ribosomal RNA small subunit methyltransferase I (222 aa).

The protein belongs to the methyltransferase superfamily. RsmI family.

The protein localises to the cytoplasm. The enzyme catalyses cytidine(1402) in 16S rRNA + S-adenosyl-L-methionine = 2'-O-methylcytidine(1402) in 16S rRNA + S-adenosyl-L-homocysteine + H(+). Functionally, catalyzes the 2'-O-methylation of the ribose of cytidine 1402 (C1402) in 16S rRNA. The protein is Ribosomal RNA small subunit methyltransferase I of Mycoplasmopsis pulmonis (strain UAB CTIP) (Mycoplasma pulmonis).